Here is a 361-residue protein sequence, read N- to C-terminus: 3-dehydroquinate synthase (361 aa).

NAD(+) is bound by residues 71–76 (DGEQYK), 105–109 (GVIGD), 129–130 (TT), K142, and K151. The Zn(2+) site is built by E184, H247, and H264.

Belongs to the sugar phosphate cyclases superfamily. Dehydroquinate synthase family. It depends on Co(2+) as a cofactor. Requires Zn(2+) as cofactor. NAD(+) is required as a cofactor.

It localises to the cytoplasm. The catalysed reaction is 7-phospho-2-dehydro-3-deoxy-D-arabino-heptonate = 3-dehydroquinate + phosphate. The protein operates within metabolic intermediate biosynthesis; chorismate biosynthesis; chorismate from D-erythrose 4-phosphate and phosphoenolpyruvate: step 2/7. Catalyzes the conversion of 3-deoxy-D-arabino-heptulosonate 7-phosphate (DAHP) to dehydroquinate (DHQ). This chain is 3-dehydroquinate synthase, found in Pectobacterium atrosepticum (strain SCRI 1043 / ATCC BAA-672) (Erwinia carotovora subsp. atroseptica).